We begin with the raw amino-acid sequence, 98 residues long: NADH-ubiquinone oxidoreductase chain 4L (98 aa).

3 helical membrane-spanning segments follow: residues 1-21 (MPLI…GMLI), 29-49 (SLLC…LMAL), and 61-81 (VVLL…LVSI).

Belongs to the complex I subunit 4L family. Core subunit of respiratory chain NADH dehydrogenase (Complex I) which is composed of 45 different subunits.

It localises to the mitochondrion inner membrane. It catalyses the reaction a ubiquinone + NADH + 5 H(+)(in) = a ubiquinol + NAD(+) + 4 H(+)(out). In terms of biological role, core subunit of the mitochondrial membrane respiratory chain NADH dehydrogenase (Complex I) which catalyzes electron transfer from NADH through the respiratory chain, using ubiquinone as an electron acceptor. Part of the enzyme membrane arm which is embedded in the lipid bilayer and involved in proton translocation. In Hylobates lar (Lar gibbon), this protein is NADH-ubiquinone oxidoreductase chain 4L (MT-ND4L).